The following is a 588-amino-acid chain: Phenol 2-monooxygenase fsqG (588 aa).

Residues Asp-9–Trp-38, Pro-17–Ala-18, Asp-37–Lys-39, Thr-45–Gly-50, Tyr-232, Ala-289–Asp-299, Asp-299, and Gly-309–Asn-313 contribute to the FAD site. Residues Asp-49 and Tyr-232 each contribute to the substrate site.

It belongs to the PheA/TfdB FAD monooxygenase family. Homodimer. FAD is required as a cofactor.

It functions in the pathway secondary metabolite biosynthesis. Phenol 2-monooxygenase; part of the gene cluster that mediates the biosynthesis of the isoquinoline alkaloids fumisoquin A, fumisoquin B and fumisoquin C; as well as small amounts of fumipyrrole as a shunt metabolite. The products of the cluster lead to a brown coloration and are important for growth and conidiation. The nonribosomal peptide synthetase-like protein fsqF, which lacks a canonical condensation domain, is required for addition of a serine-derived dehydroalanine moiety to activated tyrosine but is not essential for the subsequent steps leading to isoquinoline formation. A different enzyme, most likely the ATP-grasp enzyme fsqD, is responsible for activation of tyrosine. Three additional enzymes encoded by the fsq cluster, the N-methyltransferase fsqC, the phenol 2-monooxygenase fsqG and the FAD-dependent oxidase fsqB, catalyze the formation of the isoquinoline ring system in the fumisoquins. FsqB converts the fspF thiolation domain-bound (2S,4S,5S)-2-amino-6-(3,4-dihydroxyphenyl)-4-hydroxy-5-(methylamino)hexanoyl into isoquinoline. The cyclization most likely proceeds via a two-step mechanism, beginning with FAD-dependent oxidation of the methyl group to an iminium species followed by electrophilic attack on the deprotonated phenol. The protein is Phenol 2-monooxygenase fsqG of Aspergillus fumigatus (strain ATCC MYA-4609 / CBS 101355 / FGSC A1100 / Af293) (Neosartorya fumigata).